A 240-amino-acid chain; its full sequence is UDP-2,3-diacylglucosamine hydrolase (240 aa).

Residues Asp-7, His-9, Asp-40, Asn-78, and His-113 each contribute to the Mn(2+) site. 78–79 (NR) serves as a coordination point for substrate. Residues Asp-121, Ser-159, Thr-163, Lys-166, and His-194 each coordinate substrate. Mn(2+) is bound by residues His-194 and His-196.

This sequence belongs to the LpxH family. The cofactor is Mn(2+).

The protein localises to the cell inner membrane. It catalyses the reaction UDP-2-N,3-O-bis[(3R)-3-hydroxytetradecanoyl]-alpha-D-glucosamine + H2O = 2-N,3-O-bis[(3R)-3-hydroxytetradecanoyl]-alpha-D-glucosaminyl 1-phosphate + UMP + 2 H(+). It participates in glycolipid biosynthesis; lipid IV(A) biosynthesis; lipid IV(A) from (3R)-3-hydroxytetradecanoyl-[acyl-carrier-protein] and UDP-N-acetyl-alpha-D-glucosamine: step 4/6. Hydrolyzes the pyrophosphate bond of UDP-2,3-diacylglucosamine to yield 2,3-diacylglucosamine 1-phosphate (lipid X) and UMP by catalyzing the attack of water at the alpha-P atom. Involved in the biosynthesis of lipid A, a phosphorylated glycolipid that anchors the lipopolysaccharide to the outer membrane of the cell. In Pseudomonas entomophila (strain L48), this protein is UDP-2,3-diacylglucosamine hydrolase.